The following is a 1047-amino-acid chain: uncharacterized protein (1047 aa).

Lys17 carries the N6-acetyllysine modification. Disordered stretches follow at residues 172–208 and 236–283; these read PPCS…GSFS and RNSK…PQAL. Residue Ser208 is modified to Phosphoserine. Over residues 237–254 the composition is skewed to polar residues; sequence NSKQAMSEGPSSPWTQLA. Over residues 268–283 the composition is skewed to pro residues; it reads HYPPPHHPPPHPPQAL. Phosphoserine occurs at positions 299 and 391. Position 397 is a phosphothreonine (Thr397). Disordered stretches follow at residues 448–469, 482–504, 519–567, 668–690, 714–763, 931–1004, and 1021–1047; these read EKLQ…DSPV, ECQS…PVID, PAPE…LRGS, PSTP…GPIG, VAVA…GDSL, EAGA…TLKA, and PTWG…SHHL. A phosphoserine mark is found at Ser455, Ser496, and Ser497. 2 stretches are compositionally biased toward low complexity: residues 729–741 and 751–762; these read PARA…ARDP and PAPASTSAPGDS. A phosphoserine mark is found at Ser936, Ser956, Ser988, and Ser996. Low complexity predominate over residues 978-996; it reads AAAGEESCGASPTPATSAS.

This is an uncharacterized protein from Homo sapiens (Human).